The primary structure comprises 333 residues: UDP-N-acetylglucosamine--N-acetylmuramyl-(pentapeptide) pyrophosphoryl-undecaprenol N-acetylglucosamine transferase (333 aa).

UDP-N-acetyl-alpha-D-glucosamine-binding positions include 10–12 (TGG), N124, S177, and Q275.

It belongs to the glycosyltransferase 28 family. MurG subfamily.

The protein resides in the cell inner membrane. It catalyses the reaction di-trans,octa-cis-undecaprenyl diphospho-N-acetyl-alpha-D-muramoyl-L-alanyl-D-glutamyl-meso-2,6-diaminopimeloyl-D-alanyl-D-alanine + UDP-N-acetyl-alpha-D-glucosamine = di-trans,octa-cis-undecaprenyl diphospho-[N-acetyl-alpha-D-glucosaminyl-(1-&gt;4)]-N-acetyl-alpha-D-muramoyl-L-alanyl-D-glutamyl-meso-2,6-diaminopimeloyl-D-alanyl-D-alanine + UDP + H(+). It functions in the pathway cell wall biogenesis; peptidoglycan biosynthesis. Cell wall formation. Catalyzes the transfer of a GlcNAc subunit on undecaprenyl-pyrophosphoryl-MurNAc-pentapeptide (lipid intermediate I) to form undecaprenyl-pyrophosphoryl-MurNAc-(pentapeptide)GlcNAc (lipid intermediate II). The polypeptide is UDP-N-acetylglucosamine--N-acetylmuramyl-(pentapeptide) pyrophosphoryl-undecaprenol N-acetylglucosamine transferase (Nitratiruptor sp. (strain SB155-2)).